Here is a 240-residue protein sequence, read N- to C-terminus: Large ribosomal subunit protein bL25 (240 aa).

Disordered regions lie at residues 1–20 (MAEN…GPAR) and 204–240 (GAAP…KAKK). Positions 204-229 (GAAPAAGAAAPAGGAAPAAGAAPAKG) are enriched in low complexity. The segment covering 230–240 (GEAKGGDKAKK) has biased composition (basic and acidic residues).

This sequence belongs to the bacterial ribosomal protein bL25 family. CTC subfamily. As to quaternary structure, part of the 50S ribosomal subunit; part of the 5S rRNA/L5/L18/L25 subcomplex. Contacts the 5S rRNA. Binds to the 5S rRNA independently of L5 and L18.

This is one of the proteins that binds to the 5S RNA in the ribosome where it forms part of the central protuberance. The sequence is that of Large ribosomal subunit protein bL25 from Anaeromyxobacter sp. (strain K).